A 360-amino-acid polypeptide reads, in one-letter code: DNA replication and repair protein RecF (360 aa).

30–37 (GANGSGKT) lines the ATP pocket.

The protein belongs to the RecF family.

It localises to the cytoplasm. The RecF protein is involved in DNA metabolism; it is required for DNA replication and normal SOS inducibility. RecF binds preferentially to single-stranded, linear DNA. It also seems to bind ATP. In Acinetobacter baumannii (strain SDF), this protein is DNA replication and repair protein RecF.